Here is a 213-residue protein sequence, read N- to C-terminus: Macrodontain-1 (213 aa).

3 disulfides stabilise this stretch: cysteine 23–cysteine 63, cysteine 57–cysteine 96, and cysteine 153–cysteine 201. Residue cysteine 26 is part of the active site. Active-site residues include histidine 159 and asparagine 176.

As to quaternary structure, monomer. As to expression, fruits.

Inhibited by the general cysteine protease inhibitor E64 (L-trans-epoxysuccinyl-leucylamide-(4-guanido)-butane). Its function is as follows. Cysteine protease that catalyzes the preferential cleavage: Ala-|-Xaa &gt; Gln-|-Xaa &gt; Tyr-Xaa &gt;&gt; Leu-|-Xaa &gt; Gly-|-Xaa. Hydrolyzes the synthetic peptide substrate Bz-Phe-Val-Arg-pNA. This chain is Macrodontain-1, found in Ananas macrodontes (False pineapple).